We begin with the raw amino-acid sequence, 542 residues long: Nuclear speckle splicing regulatory protein 1 (542 aa).

The interval 21-53 (RVLQKPSVFGSDSDDDETSVSESLQREAAKKQA) is disordered. Phosphoserine is present on residues serine 27, serine 31, and serine 33. Residues 103–172 (IHNLLKAVEI…RAAALEAHLD (70 aa)) adopt a coiled-coil conformation. The interval 105–169 (NLLKAVEIRK…REKRAAALEA (65 aa)) is necessary for alternative splicing activity. Positions 190–516 (AVGEEAAPKS…FAKRSNEETV (327 aa)) are disordered. Glycyl lysine isopeptide (Lys-Gly) (interchain with G-Cter in SUMO2) cross-links involve residues lysine 198 and lysine 209. The segment covering 200–217 (SFREARTVIKEEKLRGYP) has biased composition (basic and acidic residues). The segment covering 223 to 232 (ESRPPQQSCV) has biased composition (polar residues). Residues 239-256 (EAEENPDADREFDDESSE) show a composition bias toward acidic residues. Phosphoserine occurs at positions 254 and 255. Residues 257 to 271 (DGEKRDHKVKSRGED) show a composition bias toward basic and acidic residues. Position 277 is an N6-acetyllysine (lysine 277). Basic residues predominate over residues 277–288 (KHPKHHKNRAHS). A Glycyl lysine isopeptide (Lys-Gly) (interchain with G-Cter in SUMO2) cross-link involves residue lysine 280. 3 stretches are compositionally biased toward basic and acidic residues: residues 309–335 (RGHEHQDRQSRDQESCHKDRSHREEKS), 343–475 (SHKD…KPSH), and 485–501 (RLAEERPEKGSEQERPP). Residues 372–413 (KREKYSSREQERDRQRNDHDRYSEKEKKRKEKEEHTKARRER) are a coiled coil. The residue at position 443 (serine 443) is a Phosphoserine.

The protein belongs to the NSRP1 family. In terms of assembly, interacts (via C-terminus) with SRSF1. Interacts (via C-terminus) with SRSF2.

The protein resides in the nucleus. It localises to the nucleus speckle. Its function is as follows. RNA-binding protein that mediates pre-mRNA alternative splicing regulation. This chain is Nuclear speckle splicing regulatory protein 1 (Nsrp1), found in Mus musculus (Mouse).